The primary structure comprises 761 residues: Protein ACTIVITY OF BC1 COMPLEX KINASE 8, chloroplastic (761 aa).

The transit peptide at 1-57 directs the protein to the chloroplast; that stretch reads MATSSSSSSSLLLPNINFNSRQSPTITRSVSIAGIFLPRNRLSYNHNLRIRTRLIRA. Residues 288 to 648 enclose the Protein kinase domain; the sequence is RFDYEPIAAA…VKDLRKRWDR (361 aa). ATP-binding positions include 294–302 and Lys315; that span reads IAAASLGQV. The Proton acceptor role is filled by Asp452. A helical transmembrane segment spans residues 725-745; that stretch reads PATIAYTVCAFFSLQVLIGII.

The protein belongs to the protein kinase superfamily. ADCK protein kinase family. In terms of tissue distribution, mostly expressed in leaves and flowers, and, to a lower extent, in stems, siliques and roots.

It localises to the plastid. Its subcellular location is the chloroplast envelope. It is found in the chloroplast membrane. The catalysed reaction is L-seryl-[protein] + ATP = O-phospho-L-seryl-[protein] + ADP + H(+). It catalyses the reaction L-threonyl-[protein] + ATP = O-phospho-L-threonyl-[protein] + ADP + H(+). Involved in resistance to oxidative stress (e.g. hydrogen peroxide H(2)O(2)), high light and heavy metals (e.g. cadmium ions Cd(2+)). Influences responses to reactive oxygen species (ROS) production. Together with SIA1, regulates iron distribution within the chloroplast and mediates the oxidative stress response. Together with ABC1K7, influences chloroplast lipid synthesis/accumulation and modulates chloroplast membrane composition in response to stress. This is Protein ACTIVITY OF BC1 COMPLEX KINASE 8, chloroplastic from Arabidopsis thaliana (Mouse-ear cress).